Consider the following 81-residue polypeptide: Putative membrane protein insertion efficiency factor (81 aa).

It belongs to the UPF0161 family.

It localises to the cell inner membrane. Its function is as follows. Could be involved in insertion of integral membrane proteins into the membrane. In Legionella pneumophila subsp. pneumophila (strain Philadelphia 1 / ATCC 33152 / DSM 7513), this protein is Putative membrane protein insertion efficiency factor.